The following is a 535-amino-acid chain: Dimethylaniline monooxygenase [N-oxide-forming] 2 (535 aa).

An N-acetylalanine modification is found at alanine 2. FAD contacts are provided by residues 9 to 13 (GAGVS), glutamate 32, 40 to 41 (VW), and 61 to 62 (NT). NADP(+)-binding positions include 60–61 (TN) and 195–198 (SGSD). Residue lysine 492 forms a Glycyl lysine isopeptide (Lys-Gly) (interchain with G-Cter in SUMO) linkage. The helical transmembrane segment at 510–530 (FPVSFLLKILGLVAVVVAFFC) threads the bilayer.

Belongs to the FMO family. FAD serves as cofactor. Requires Mg(2+) as cofactor.

It is found in the microsome membrane. Its subcellular location is the endoplasmic reticulum membrane. It catalyses the reaction N,N-dimethylaniline + NADPH + O2 + H(+) = N,N-dimethylaniline N-oxide + NADP(+) + H2O. Catalyzes the oxidative metabolism of numerous xenobiotics, including mainly therapeutic drugs and insecticides that contain a soft nucleophile, most commonly nitrogen and sulfur and participates to their bioactivation. This chain is Dimethylaniline monooxygenase [N-oxide-forming] 2, found in Macaca mulatta (Rhesus macaque).